We begin with the raw amino-acid sequence, 389 residues long: Phospho-N-acetylmuramoyl-pentapeptide-transferase (389 aa).

The next 11 membrane-spanning stretches (helical) occupy residues 21–41 (YITMRAVLACATALLIGLVAG), 71–91 (TPTMGGALILIAVAISTLLWA), 97–117 (FVWVVLLVTFGFGWIGWMDDY), 134–154 (FFWQATIGLVAAVYLAFAVSA), 167–187 (WVSSGFAMPLPTRADLIVPFF), 190–210 (VSYPLGVLGFVALTWAVIVGT), 222–242 (GLAIMPTVMVGSALGIFAYVV), 259–279 (AAELMVLCAAIAGAGLAFLWF), 286–306 (VFMGDVGALALGGALGTIAVI), 311–331 (IVLFIMGGVFVVETLSVMMQV), and 366–386 (QVVVRFWIISMMLVLIGLSTL).

The protein belongs to the glycosyltransferase 4 family. MraY subfamily. Mg(2+) is required as a cofactor.

Its subcellular location is the cell inner membrane. It catalyses the reaction UDP-N-acetyl-alpha-D-muramoyl-L-alanyl-gamma-D-glutamyl-meso-2,6-diaminopimeloyl-D-alanyl-D-alanine + di-trans,octa-cis-undecaprenyl phosphate = di-trans,octa-cis-undecaprenyl diphospho-N-acetyl-alpha-D-muramoyl-L-alanyl-D-glutamyl-meso-2,6-diaminopimeloyl-D-alanyl-D-alanine + UMP. It functions in the pathway cell wall biogenesis; peptidoglycan biosynthesis. Catalyzes the initial step of the lipid cycle reactions in the biosynthesis of the cell wall peptidoglycan: transfers peptidoglycan precursor phospho-MurNAc-pentapeptide from UDP-MurNAc-pentapeptide onto the lipid carrier undecaprenyl phosphate, yielding undecaprenyl-pyrophosphoryl-MurNAc-pentapeptide, known as lipid I. The protein is Phospho-N-acetylmuramoyl-pentapeptide-transferase of Bordetella petrii (strain ATCC BAA-461 / DSM 12804 / CCUG 43448).